The chain runs to 332 residues: MLALGKLLDLTLAGREPTEKIQLTADGTRLHWLAEGALEVTPIGARDNGVDLLLSAGIHGNETAPIELLERLIRKVAAGTLKPAARVLFLFGNPEAIRRGERYVEQDMNRLFNGRHEEGSGNEAFRAAELERLAQVFFSKTERVHLHYDLHTAIRGSKIEQFALYPWAEGREHSRSELARLRDAGIEAVLLQNKPGITFSAYTYGQLGAEAFTLELGKARPFGENQEVNLERLERSLELLIDGSEEQPDGSRLDGLKLFSVSREVIKHSDHFRLHLDDDVANFTELSPGYLLAEDIGGTRWVVEEVGARIIFPNPRVKNGLRAGILVVPAKL.

3 residues coordinate Zn(2+): H59, E62, and H151. Residue E215 is part of the active site.

The protein belongs to the AspA/AstE family. Succinylglutamate desuccinylase subfamily. Zn(2+) is required as a cofactor.

The catalysed reaction is N-succinyl-L-glutamate + H2O = L-glutamate + succinate. It functions in the pathway amino-acid degradation; L-arginine degradation via AST pathway; L-glutamate and succinate from L-arginine: step 5/5. Transforms N(2)-succinylglutamate into succinate and glutamate. This Pseudomonas aeruginosa (strain UCBPP-PA14) protein is Succinylglutamate desuccinylase.